We begin with the raw amino-acid sequence, 293 residues long: Probable tRNA-splicing endonuclease subunit Sen2 (293 aa).

Active-site residues include Y157, H165, and K204. The chain crosses the membrane as a helical span at residues 267–287; that stretch reads VVFNHWGVILGFTVLSGLLVY.

This sequence belongs to the tRNA-intron endonuclease family. As to quaternary structure, tRNA splicing endonuclease is a heterotetramer composed of SEN2, SEN15, SEN34/LENG5 and SEN54.

It is found in the nucleus. Its subcellular location is the membrane. The catalysed reaction is pretRNA = a 3'-half-tRNA molecule with a 5'-OH end + a 5'-half-tRNA molecule with a 2',3'-cyclic phosphate end + an intron with a 2',3'-cyclic phosphate and a 5'-hydroxyl terminus.. Constitutes one of the two catalytic subunit of the tRNA-splicing endonuclease complex, a complex responsible for identification and cleavage of the splice sites in pre-tRNA. It cleaves pre-tRNA at the 5'- and 3'-splice sites to release the intron. The products are an intron and two tRNA half-molecules bearing 2',3'-cyclic phosphate and 5'-OH termini. There are no conserved sequences at the splice sites, but the intron is invariably located at the same site in the gene, placing the splice sites an invariant distance from the constant structural features of the tRNA body. Probably carries the active site for 5'-splice site cleavage. This chain is Probable tRNA-splicing endonuclease subunit Sen2, found in Oryza sativa subsp. japonica (Rice).